The primary structure comprises 346 residues: Protein MelA (346 aa).

VOC domains are found at residues 12-141 and 155-305; these read GIEF…DFEA and EVDH…IFTK. Fe cation is bound by residues His158, His237, and Glu314.

The protein belongs to the 4HPPD family. Requires Fe cation as cofactor.

The protein localises to the cytoplasm. Its pathway is pigment biosynthesis; melanin biosynthesis. The polypeptide is Protein MelA (melA) (Shewanella colwelliana (Alteromonas colwelliana)).